We begin with the raw amino-acid sequence, 172 residues long: 3-hydroxydecanoyl-[acyl-carrier-protein] dehydratase (172 aa).

Residue His71 is part of the active site.

It belongs to the thioester dehydratase family. FabA subfamily. In terms of assembly, homodimer.

Its subcellular location is the cytoplasm. It catalyses the reaction a (3R)-hydroxyacyl-[ACP] = a (2E)-enoyl-[ACP] + H2O. The enzyme catalyses (3R)-hydroxydecanoyl-[ACP] = (2E)-decenoyl-[ACP] + H2O. The catalysed reaction is (2E)-decenoyl-[ACP] = (3Z)-decenoyl-[ACP]. The protein operates within lipid metabolism; fatty acid biosynthesis. Necessary for the introduction of cis unsaturation into fatty acids. Catalyzes the dehydration of (3R)-3-hydroxydecanoyl-ACP to E-(2)-decenoyl-ACP and then its isomerization to Z-(3)-decenoyl-ACP. Can catalyze the dehydratase reaction for beta-hydroxyacyl-ACPs with saturated chain lengths up to 16:0, being most active on intermediate chain length. This chain is 3-hydroxydecanoyl-[acyl-carrier-protein] dehydratase, found in Escherichia coli O6:K15:H31 (strain 536 / UPEC).